Here is a 173-residue protein sequence, read N- to C-terminus: Superoxide dismutase [Cu-Zn] (173 aa).

The N-terminal stretch at 1 to 19 (MKSLFIASTMVLMAFPAFA) is a signal peptide. Cu cation-binding residues include His67, His69, and His92. The cysteines at positions 74 and 169 are disulfide-linked. Positions 92, 101, 109, and 112 each coordinate Zn(2+). Position 147 (His147) interacts with Cu cation.

Belongs to the Cu-Zn superoxide dismutase family. In terms of assembly, homodimer. Cu cation is required as a cofactor. The cofactor is Zn(2+).

It localises to the periplasm. The catalysed reaction is 2 superoxide + 2 H(+) = H2O2 + O2. Functionally, destroys radicals which are normally produced within the cells and which are toxic to biological systems. The protein is Superoxide dismutase [Cu-Zn] (sodC) of Brucella abortus biovar 1 (strain 9-941).